Consider the following 363-residue polypeptide: Phosphoribosylformylglycinamidine cyclo-ligase (363 aa).

It belongs to the AIR synthase family.

It localises to the cytoplasm. It carries out the reaction 2-formamido-N(1)-(5-O-phospho-beta-D-ribosyl)acetamidine + ATP = 5-amino-1-(5-phospho-beta-D-ribosyl)imidazole + ADP + phosphate + H(+). Its pathway is purine metabolism; IMP biosynthesis via de novo pathway; 5-amino-1-(5-phospho-D-ribosyl)imidazole from N(2)-formyl-N(1)-(5-phospho-D-ribosyl)glycinamide: step 2/2. The polypeptide is Phosphoribosylformylglycinamidine cyclo-ligase (Parvibaculum lavamentivorans (strain DS-1 / DSM 13023 / NCIMB 13966)).